The primary structure comprises 345 residues: Large ribosomal subunit protein uL10 (345 aa).

The disordered stretch occupies residues 303–345 (SLPQTAAPQQTPQPTEAPKEEAQEEKKEGPSEEEIAGSLASLF). Low complexity predominate over residues 305 to 318 (PQTAAPQQTPQPTE). Over residues 319–332 (APKEEAQEEKKEGP) the composition is skewed to basic and acidic residues.

It belongs to the universal ribosomal protein uL10 family. Part of the 50S ribosomal subunit. Forms part of the ribosomal stalk which helps the ribosome interact with GTP-bound translation factors. Forms a heptameric L10(L12)2(L12)2(L12)2 complex, where L10 forms an elongated spine to which the L12 dimers bind in a sequential fashion.

Functionally, forms part of the ribosomal stalk, playing a central role in the interaction of the ribosome with GTP-bound translation factors. The sequence is that of Large ribosomal subunit protein uL10 from Pyrobaculum aerophilum (strain ATCC 51768 / DSM 7523 / JCM 9630 / CIP 104966 / NBRC 100827 / IM2).